We begin with the raw amino-acid sequence, 317 residues long: Acetyl-coenzyme A carboxylase carboxyl transferase subunit alpha (317 aa).

In terms of domain architecture, CoA carboxyltransferase C-terminal spans 40–293 (LEKRSADALK…GDIITASLRS (254 aa)).

Belongs to the AccA family. Acetyl-CoA carboxylase is a heterohexamer composed of biotin carboxyl carrier protein (AccB), biotin carboxylase (AccC) and two subunits each of ACCase subunit alpha (AccA) and ACCase subunit beta (AccD).

It localises to the cytoplasm. It carries out the reaction N(6)-carboxybiotinyl-L-lysyl-[protein] + acetyl-CoA = N(6)-biotinyl-L-lysyl-[protein] + malonyl-CoA. The protein operates within lipid metabolism; malonyl-CoA biosynthesis; malonyl-CoA from acetyl-CoA: step 1/1. Its function is as follows. Component of the acetyl coenzyme A carboxylase (ACC) complex. First, biotin carboxylase catalyzes the carboxylation of biotin on its carrier protein (BCCP) and then the CO(2) group is transferred by the carboxyltransferase to acetyl-CoA to form malonyl-CoA. This Brucella anthropi (strain ATCC 49188 / DSM 6882 / CCUG 24695 / JCM 21032 / LMG 3331 / NBRC 15819 / NCTC 12168 / Alc 37) (Ochrobactrum anthropi) protein is Acetyl-coenzyme A carboxylase carboxyl transferase subunit alpha.